Reading from the N-terminus, the 666-residue chain is ESX-1 secretion-associated protein EspI (666 aa).

Residues 1-15 are compositionally biased toward basic and acidic residues; that stretch reads MAADYDKLFRPHEGM. Residues 1 to 378 form a disordered region; it reads MAADYDKLFR…ATKPPKVVSQ (378 aa). Residues 22–31 show a composition bias toward low complexity; the sequence is AAQPFFDPSA. Composition is skewed to pro residues over residues 64 to 80, 87 to 144, and 188 to 205; these read APPP…PTPM, PPSP…PAPT, and PAPP…PAPS. Residues 222–231 are compositionally biased toward basic residues; it reads HSRRARRGHR. Residues 284 to 297 show a composition bias toward pro residues; it reads PTRPAPTEPPPSPS. Basic residues predominate over residues 357-371; sequence PKVKKVKPQKPKATK. 424–431 is a binding site for ATP; that stretch reads LKGGAGKT.

Its function is as follows. Required to repress ESX-1-mediated secretion under low ATP conditions. This function requires the ATP-binding motif. In Mycobacterium tuberculosis (strain CDC 1551 / Oshkosh), this protein is ESX-1 secretion-associated protein EspI.